The sequence spans 425 residues: Trigger factor (425 aa).

In terms of domain architecture, PPIase FKBP-type spans 158-231 (GDLVRISMEV…VQEVYRRTLP (74 aa)).

This sequence belongs to the FKBP-type PPIase family. Tig subfamily.

Its subcellular location is the cytoplasm. It catalyses the reaction [protein]-peptidylproline (omega=180) = [protein]-peptidylproline (omega=0). Its function is as follows. Involved in protein export. Acts as a chaperone by maintaining the newly synthesized protein in an open conformation. Functions as a peptidyl-prolyl cis-trans isomerase. The polypeptide is Trigger factor (Thermotoga neapolitana (strain ATCC 49049 / DSM 4359 / NBRC 107923 / NS-E)).